The following is a 171-amino-acid chain: Protein-export protein SecB (171 aa).

The protein belongs to the SecB family. In terms of assembly, homotetramer, a dimer of dimers. One homotetramer interacts with 1 SecA dimer.

The protein localises to the cytoplasm. Functionally, one of the proteins required for the normal export of preproteins out of the cell cytoplasm. It is a molecular chaperone that binds to a subset of precursor proteins, maintaining them in a translocation-competent state. It also specifically binds to its receptor SecA. In Xanthomonas oryzae pv. oryzae (strain MAFF 311018), this protein is Protein-export protein SecB.